Consider the following 484-residue polypeptide: Suppressor of fused homolog (484 aa).

The segment at methionine 1–serine 21 is disordered. Pro residues predominate over residues proline 12–serine 21. Residue lysine 257 forms a Glycyl lysine isopeptide (Lys-Gly) (interchain with G-Cter in ubiquitin) linkage. Residues serine 279–leucine 360 form a disordered region. The residue at position 301 (serine 301) is a Phosphoserine. Lysine 303 carries the N6-acetyllysine modification. Lysine 321 participates in a covalent cross-link: Glycyl lysine isopeptide (Lys-Gly) (interchain with G-Cter in SUMO2). Positions threonine 336–leucine 347 are enriched in basic and acidic residues. Phosphoserine occurs at positions 342, 346, and 352. Threonine 353 is modified (phosphothreonine). A Phosphoserine modification is found at serine 481.

Belongs to the SUFU family. As to quaternary structure, may form homodimers. Interacts with ULK3; inactivating the protein kinase activity of ULK3. Interacts with RAB23. Part of a DNA-bound corepressor complex containing SAP18, GLI1 and SIN3. Part of a complex containing CTNNB1. Binds BTRC, GLI2, GLI3, SAP18 and STK36. Binds both free and DNA-bound GLI1. Interacts with KIF7. Interacts with GLI3FL and this interaction regulates the formation of either repressor or activator forms of GLI3. Its association with GLI3FL is regulated by Hh signaling and dissociation of the SUFU-GLI3 interaction requires the presence of the ciliary motor KIF3A. Polyubiquitinated at Lys-257 by the SCF(FBXL17) complex, leading to its subsequent degradation and allowing the release of GLI1 for proper hedgehog/smoothened signal transduction. Ubiquitination is impaired by phosphorylation at Ser-342, Ser-346, Ser-352 and Thr-353. Post-translationally, phosphorylation at Ser-342, Ser-346, Ser-352 and Thr-353 prevents ubiquitination by the SCF(FBXL17) complex. Widely expressed in adult and fetal tissues.

The protein localises to the cytoplasm. It localises to the nucleus. Its function is as follows. Negative regulator in the hedgehog/smoothened signaling pathway. Down-regulates GLI1-mediated transactivation of target genes. Part of a corepressor complex that acts on DNA-bound GLI1. May also act by linking GLI1 to BTRC and thereby targeting GLI1 to degradation by the proteasome. Sequesters GLI1, GLI2 and GLI3 in the cytoplasm, this effect is overcome by binding of STK36 to both SUFU and a GLI protein. Negative regulator of beta-catenin signaling. Regulates the formation of either the repressor form (GLI3R) or the activator form (GLI3A) of the full-length form of GLI3 (GLI3FL). GLI3FL is complexed with SUFU in the cytoplasm and is maintained in a neutral state. Without the Hh signal, the SUFU-GLI3 complex is recruited to cilia, leading to the efficient processing of GLI3FL into GLI3R. When Hh signaling is initiated, SUFU dissociates from GLI3FL and the latter translocates to the nucleus, where it is phosphorylated, destabilized, and converted to a transcriptional activator (GLI3A). Required for normal embryonic development. Required for the proper formation of hair follicles and the control of epidermal differentiation. The polypeptide is Suppressor of fused homolog (Mus musculus (Mouse)).